We begin with the raw amino-acid sequence, 548 residues long: T-complex protein 1 subunit theta (548 aa).

Residue alanine 2 is modified to N-acetylalanine. Serine 23 carries the phosphoserine modification. Tyrosine 30 carries the post-translational modification Phosphotyrosine. The ADP site is built by tyrosine 47 and glycine 48. Position 99 (aspartate 99) interacts with Mg(2+). ADP is bound by residues glycine 100, threonine 101, asparagine 102, and phenylalanine 103. Residues glycine 100, threonine 101, and asparagine 102 each contribute to the ATP site. The residue at position 162 (serine 162) is a Phosphoserine. ADP contacts are provided by methionine 169, serine 170, and lysine 171. Serine 170 and lysine 171 together coordinate ATP. At serine 213 the chain carries Phosphoserine. Residues lysine 224, lysine 254, and lysine 260 each participate in a glycyl lysine isopeptide (Lys-Gly) (interchain with G-Cter in SUMO2) cross-link. Phosphoserine is present on residues serine 269 and serine 317. Residues lysine 318 and lysine 400 each carry the N6-acetyllysine modification. Glycine 412 contacts ADP. Glycine 412 contacts ATP. Residue lysine 459 forms a Glycyl lysine isopeptide (Lys-Gly) (interchain with G-Cter in SUMO1) linkage. Position 466 is an N6-acetyllysine (lysine 466). Residue aspartate 499 coordinates ADP. Residues aspartate 499 and lysine 504 each contribute to the ATP site. Tyrosine 505 is subject to Phosphotyrosine. The interval 529-548 is disordered; sequence PAGGPKPPSGKKDWDDDQND. Lysine 534 is covalently cross-linked (Glycyl lysine isopeptide (Lys-Gly) (interchain with G-Cter in SUMO2)). Serine 537 carries the phosphoserine modification. Lysine 539 is covalently cross-linked (Glycyl lysine isopeptide (Lys-Gly) (interchain with G-Cter in SUMO2)).

Belongs to the TCP-1 chaperonin family. Component of the chaperonin-containing T-complex (TRiC), a hexadecamer composed of two identical back-to-back stacked rings enclosing a protein folding chamber. Each ring is made up of eight different subunits: TCP1/CCT1, CCT2, CCT3, CCT4, CCT5, CCT6A/CCT6, CCT7, CCT8. Interacts with PACRG. Interacts with DNAAF4. Interacts with synaptic plasticity regulator PANTS.

The protein localises to the cytoplasm. It is found in the cytoskeleton. Its subcellular location is the microtubule organizing center. It localises to the centrosome. The protein resides in the cilium basal body. The enzyme catalyses ATP + H2O = ADP + phosphate + H(+). Functionally, component of the chaperonin-containing T-complex (TRiC), a molecular chaperone complex that assists the folding of actin, tubulin and other proteins upon ATP hydrolysis. The TRiC complex mediates the folding of WRAP53/TCAB1, thereby regulating telomere maintenance. As part of the TRiC complex may play a role in the assembly of BBSome, a complex involved in ciliogenesis regulating transports vesicles to the cilia. This Macaca fascicularis (Crab-eating macaque) protein is T-complex protein 1 subunit theta (CCT8).